Here is an 82-residue protein sequence, read N- to C-terminus: MVLVQDLLHPSPATEAKQHKLKTLVQQPRSFFMDVKCQGCLNITTVFSHAQTAVTCDSCSTVLCTPTGGKAKLTEGCSFRRK.

The Zn(2+) site is built by Cys-37, Cys-40, Cys-56, and Cys-59.

This sequence belongs to the eukaryotic ribosomal protein eS27 family. Component of the small ribosomal subunit. Mature ribosomes consist of a small (40S) and a large (60S) subunit. The 40S subunit contains about 32 different proteins and 1 molecule of RNA (18S). The 60S subunit contains 45 different proteins and 3 molecules of RNA (25S, 5.8S and 5S). Zn(2+) is required as a cofactor.

The protein localises to the cytoplasm. In terms of biological role, component of the ribosome, a large ribonucleoprotein complex responsible for the synthesis of proteins in the cell. The small ribosomal subunit (SSU) binds messenger RNAs (mRNAs) and translates the encoded message by selecting cognate aminoacyl-transfer RNA (tRNA) molecules. The large subunit (LSU) contains the ribosomal catalytic site termed the peptidyl transferase center (PTC), which catalyzes the formation of peptide bonds, thereby polymerizing the amino acids delivered by tRNAs into a polypeptide chain. The nascent polypeptides leave the ribosome through a tunnel in the LSU and interact with protein factors that function in enzymatic processing, targeting, and the membrane insertion of nascent chains at the exit of the ribosomal tunnel. The sequence is that of Small ribosomal subunit protein eS27 (RPS27) from Candida albicans (strain SC5314 / ATCC MYA-2876) (Yeast).